Reading from the N-terminus, the 181-residue chain is Early E3 20.3 kDa glycoprotein (181 aa).

4 N-linked (GlcNAc...) asparagine; by host glycosylation sites follow: N29, N57, N70, and N75.

Belongs to the adenoviridae E3_20 family.

E3 proteins seem to be dispensable for virus growth in tissue culture cells. They are potentially important for virus growth under special conditions; E3 region may help adenoviruses to evade the immune surveillance of the host. This is Early E3 20.3 kDa glycoprotein from Homo sapiens (Human).